Consider the following 393-residue polypeptide: Probable RNA methyltransferase sce3898 (393 aa).

Glutamate 82 serves as the catalytic Proton acceptor. One can recognise a Radical SAM core domain in the interval 90-329; it reads RPGRYSACVS…VRSARLDAFR (240 aa). The cysteines at positions 97 and 353 are disulfide-linked. The [4Fe-4S] cluster site is built by cysteine 104, cysteine 108, and cysteine 111. Residues 157–158, 212–214, and asparagine 294 each bind S-adenosyl-L-methionine; these read GE and SLG. Cysteine 353 (S-methylcysteine intermediate) is an active-site residue. The disordered stretch occupies residues 357-393; it reads ARPSAEAQRPGGRRAPPRPGATAGAADVGPSAPPRPA. Over residues 373-382 the composition is skewed to low complexity; sequence PRPGATAGAA.

Belongs to the radical SAM superfamily. RlmN family. The cofactor is [4Fe-4S] cluster.

Its subcellular location is the cytoplasm. In Sorangium cellulosum (strain So ce56) (Polyangium cellulosum (strain So ce56)), this protein is Probable RNA methyltransferase sce3898.